The following is a 166-amino-acid chain: Large ribosomal subunit protein uL10 (166 aa).

This sequence belongs to the universal ribosomal protein uL10 family. Part of the ribosomal stalk of the 50S ribosomal subunit. The N-terminus interacts with L11 and the large rRNA to form the base of the stalk. The C-terminus forms an elongated spine to which L12 dimers bind in a sequential fashion forming a multimeric L10(L12)X complex.

Forms part of the ribosomal stalk, playing a central role in the interaction of the ribosome with GTP-bound translation factors. In Pseudomonas putida (strain GB-1), this protein is Large ribosomal subunit protein uL10.